Reading from the N-terminus, the 729-residue chain is Neurochondrin (729 aa).

Position 2 is an N-acetylserine (S2). A Phosphoserine modification is found at S2. 2 S-palmitoyl cysteine lipidation sites follow: C3 and C4. R75 carries the asymmetric dimethylarginine modification. Position 448 is a phosphoserine (S448).

It belongs to the neurochondrin family. Interacts with MCHR1. Interacts with SEMA4C. Interacts with DIAPH1 (via FH3 domain). Interacts with GRM5. In terms of processing, palmitoylated. Palmitoylation by ZDHHC1, ZDHHC3 and ZDHHC11 regulates the association of NCDN with endosome membranes. May also be palmitoylated by ZDHHC7. Expressed in brain and in peripheral nervous system (at protein level). Weakly expressed in neurites.

The protein resides in the cytoplasm. The protein localises to the cytosol. It localises to the endosome membrane. Its subcellular location is the cell projection. It is found in the dendrite. The protein resides in the postsynapse. Its function is as follows. Probably involved in signal transduction, in the nervous system, via increasing cell surface localization of GRM5 and positively regulating its signaling. Required for the spatial learning process. Acts as a negative regulator of Ca(2+)-calmodulin-dependent protein kinase 2 (CaMK2) phosphorylation. May play a role in modulating melanin-concentrating hormone-mediated functions via its interaction with MCHR1 that interferes with G protein-coupled signal transduction. May be involved in bone metabolism. May also be involved in neurite outgrowth. The chain is Neurochondrin (Ncdn) from Rattus norvegicus (Rat).